The sequence spans 614 residues: UvrABC system protein C (614 aa).

Positions 26–104 constitute a GIY-YIG domain; that stretch reads NLPGVYKMLG…IKEYRPPYNV (79 aa). The region spanning 215 to 250 is the UVR domain; sequence SDIHSALIEKMEASAEELDFEKAVFYRDQLSMLREV.

Belongs to the UvrC family. Interacts with UvrB in an incision complex.

Its subcellular location is the cytoplasm. Its function is as follows. The UvrABC repair system catalyzes the recognition and processing of DNA lesions. UvrC both incises the 5' and 3' sides of the lesion. The N-terminal half is responsible for the 3' incision and the C-terminal half is responsible for the 5' incision. The polypeptide is UvrABC system protein C (Psychrobacter arcticus (strain DSM 17307 / VKM B-2377 / 273-4)).